Here is a 134-residue protein sequence, read N- to C-terminus: Glycine cleavage system H protein (134 aa).

The Lipoyl-binding domain maps to 24–106 (TVRVGITDYA…YGAGWLLDIQ (83 aa)). At Lys65 the chain carries N6-lipoyllysine.

It belongs to the GcvH family. As to quaternary structure, the glycine cleavage system is composed of four proteins: P, T, L and H. It depends on (R)-lipoate as a cofactor.

The glycine cleavage system catalyzes the degradation of glycine. The H protein shuttles the methylamine group of glycine from the P protein to the T protein. The chain is Glycine cleavage system H protein from Mycobacterium bovis (strain ATCC BAA-935 / AF2122/97).